Here is a 151-residue protein sequence, read N- to C-terminus: uncharacterized protein (151 aa).

Transmembrane regions (helical) follow at residues 12–32 (LAYF…LFII), 59–79 (LAFL…YGLL), and 114–134 (YFAY…IAFG).

The protein resides in the cell membrane. This is an uncharacterized protein from Bacillus subtilis (strain 168).